The following is a 247-amino-acid chain: ATP synthase subunit a, chloroplastic (247 aa).

The next 5 membrane-spanning stretches (helical) occupy residues 36–56, 95–115, 134–154, 199–219, and 220–240; these read GQVLLVSWFVMTIIISLSIFG, VPFIGTIFLFIFVSNWSGALV, INTTAALALLTSISYFYAGFS, LVVGVLITLVPLVVPMPLMLL, and GLFTSAIQALIFATLAAAYIG.

Belongs to the ATPase A chain family. In terms of assembly, F-type ATPases have 2 components, CF(1) - the catalytic core - and CF(0) - the membrane proton channel. CF(1) has five subunits: alpha(3), beta(3), gamma(1), delta(1), epsilon(1). CF(0) has four main subunits: a, b, b' and c.

The protein resides in the plastid. Its subcellular location is the chloroplast thylakoid membrane. Key component of the proton channel; it plays a direct role in the translocation of protons across the membrane. This is ATP synthase subunit a, chloroplastic from Mesostigma viride (Green alga).